Here is a 489-residue protein sequence, read N- to C-terminus: Cytochrome P450 monooxygenase AMT3 (489 aa).

Residues 292-312 form a helical membrane-spanning segment; sequence LFMVAGTETTITALSGLVFLL. A heme-binding site is contributed by C436.

The protein belongs to the cytochrome P450 family. Heme serves as cofactor.

It is found in the membrane. The protein operates within mycotoxin biosynthesis. Its function is as follows. Cytochrome P450 monooxygenase; part of the gene clusters that mediate the biosynthesis of AM-toxins, host-selective toxins (HSTs) causing Alternaria blotch on apple, a worldwide distributed disease. AM-toxins are cyclic depsipeptides containing the 3 residues 2-hydroxy-isovaleric acid (2-HIV), dehydroalanine, L-alanine which are common for all 3 AM-toxins I to III. The fourth precursor is L-alpha-amino-methoxyphenyl-valeric acid (L-Amv) for AM-toxin I, L-alpha-amino-phenyl-valeric acid (L-Apv) for AM-toxin II, and L-alpha-amino-hydroxyphenyl-valeric acid (L-Ahv) for AM-toxin III. AM-toxins have two target sites for affecting susceptible apple cells; they cause invagination of the plasma membrane and electrolyte loss and chloroplast disorganization. The non-ribosomal peptide synthetase AMT1 contains 4 catalytic modules and is responsible for activation of each residue in AM-toxin. The aldo-keto reductase AMT2 catalyzes the conversion of 2-keto-isovaleric acid (2-KIV) to 2-hydroxy-isovaleric acid (2-HIV), one of the precursor residues incorporated by AMT1 during AM-toxin biosynthesis, by reduction of its ketone to an alcohol. The cytochrome P450 monooxygenase AMT3 and the thioesterase AMT4 are also important for AM-toxin production, but their exact function within the AM-toxin biosynthesis are not known yet. Up to 21 proteins (including AMT1 to AMT4) are predicted to be involved in AM-toxin biosynthesis since their expression ishighly up-regulated in AM-toxin-producing cultures. This chain is Cytochrome P450 monooxygenase AMT3, found in Alternaria alternata (Alternaria rot fungus).